A 542-amino-acid polypeptide reads, in one-letter code: MSSSSSSPRETYEEDREYESQAKRLKTEEGEIDYSAEEGENRREATPRGGGDGGGGGRSFSQPEAGGSHHKVSVSPVVHVRGLCESVVEADLVEALEKFGTICYVMMMPFKRQALVEFENIDSAKECVTFAADEPVYIAGQQAFFNYSTSKRITRPGNTDDPSGGNKVLLLSIQNPLYPITVDVLYTVCNPVGKVQRIVIFKRNGIQAMVEFESVLCAQKAKAALNGADIYAGCCTLKIEYARPTRLNVIRNDNDSWDYTKPYLGRRDRGKGRQRQAILGEHPSSFRHDGYGSHGPLLPLPSRYRMGSRDTPELVAYPLPQASSSYMHGGNPSGSVVMVSGLHQLKMNCSRVFNLFCLYGNIEKVKFMKTIPGTALVEMGDEYAVERAVTHLNNVKLFGKRLNVCVSKQHSVVPSQIFELEDGTSSYKDFAMSKNNRFTSAGQASKNIIQPPSCVLHYYNVPLCVTEETFTKLCNDHEVLTFIKYKVFDAKPSAKTLSGLLEWECKTDAVEALTALNHYQIRVPNGSNPYTLKLCFSTSSHL.

Residues 1–71 (MSSSSSSPRE…QPEAGGSHHK (71 aa)) form a disordered region. A compositionally biased stretch (basic and acidic residues) spans 18 to 29 (YESQAKRLKTEE). K26 participates in a covalent cross-link: Glycyl lysine isopeptide (Lys-Gly) (interchain with G-Cter in SUMO2). S35 is subject to Phosphoserine. Position 46 is a phosphothreonine (T46). Residues 48–58 (RGGGDGGGGGR) show a composition bias toward gly residues. A phosphoserine mark is found at S59, S68, and S75. RRM domains follow at residues 76–150 (PVVH…YSTS), 166–244 (NKVL…YARP), and 335–409 (SVVM…VSKQ). K491 participates in a covalent cross-link: Glycyl lysine isopeptide (Lys-Gly) (interchain with G-Cter in SUMO2).

In terms of assembly, interacts with HNRNPL. As to expression, widely expressed. Detected in bone marrow stroma cells, skeletal muscle, heart, placenta, pancreas, kidney and lung.

In terms of biological role, RNA-binding protein that functions as a regulator of alternative splicing for multiple target mRNAs, including PTPRC/CD45 and STAT5A. Required for alternative splicing of PTPRC. This Homo sapiens (Human) protein is Heterogeneous nuclear ribonucleoprotein L-like (HNRNPLL).